The chain runs to 317 residues: Putative S-adenosyl-L-methionine-dependent methyltransferase MSMEG_0093 (317 aa).

S-adenosyl-L-methionine contacts are provided by residues aspartate 134 and aspartate 163–leucine 164.

This sequence belongs to the UPF0677 family.

Exhibits S-adenosyl-L-methionine-dependent methyltransferase activity. The sequence is that of Putative S-adenosyl-L-methionine-dependent methyltransferase MSMEG_0093 from Mycolicibacterium smegmatis (strain ATCC 700084 / mc(2)155) (Mycobacterium smegmatis).